The following is a 332-amino-acid chain: MDIKTLHPAIAAAYRVLETGEPISLEEAELLASLPGEFSLDLASLANKVRNRWGKGGIHACSIMNAKSGVCGENCRFCAQSRHNHADIEVYPLVDEDAVLFEARSCAEHGVSHFGLVTSGYGYRTMNAEFKRILAMIDRLHEELPELNVCASIGILGPETAAALARHGIAHYNINLQVAPEKYAGLIADTHGIEERMETVRLLRREGVNVCCGGIIGVGESMEDRVAMLFALRDLDVSVIPINVLVPIEGTPLQAAESVPLADIVKVFALARLVHPHSIIKFAAGRETLMKDFQGLLMLSGADGYLTGGYLTTRGRDLADDQRFSERLASFS.

One can recognise a Radical SAM core domain in the interval 53–283; sequence WGKGGIHACS…VHPHSIIKFA (231 aa). Positions 71, 75, and 78 each coordinate [4Fe-4S] cluster. C150, C211, and K281 together coordinate [2Fe-2S] cluster.

This sequence belongs to the radical SAM superfamily. Biotin synthase family. In terms of assembly, homodimer. It depends on [4Fe-4S] cluster as a cofactor. [2Fe-2S] cluster is required as a cofactor.

It catalyses the reaction (4R,5S)-dethiobiotin + (sulfur carrier)-SH + 2 reduced [2Fe-2S]-[ferredoxin] + 2 S-adenosyl-L-methionine = (sulfur carrier)-H + biotin + 2 5'-deoxyadenosine + 2 L-methionine + 2 oxidized [2Fe-2S]-[ferredoxin]. Its pathway is cofactor biosynthesis; biotin biosynthesis; biotin from 7,8-diaminononanoate: step 2/2. Its function is as follows. Catalyzes the conversion of dethiobiotin (DTB) to biotin by the insertion of a sulfur atom into dethiobiotin via a radical-based mechanism. In Chlorobium phaeovibrioides (strain DSM 265 / 1930) (Prosthecochloris vibrioformis (strain DSM 265)), this protein is Biotin synthase.